Here is a 462-residue protein sequence, read N- to C-terminus: Threonine--tRNA ligase, mitochondrial (462 aa).

The N-terminal 45 residues, 1–45 (MKIQLVRWHCSRNALWNRAFYSTRKATKNASSATPATMTSMVSQR), are a transit peptide targeting the mitochondrion.

The protein belongs to the class-II aminoacyl-tRNA synthetase family.

The protein localises to the mitochondrion matrix. The catalysed reaction is tRNA(Thr) + L-threonine + ATP = L-threonyl-tRNA(Thr) + AMP + diphosphate + H(+). This Saccharomyces cerevisiae (strain ATCC 204508 / S288c) (Baker's yeast) protein is Threonine--tRNA ligase, mitochondrial (MST1).